Reading from the N-terminus, the 393-residue chain is Ig gamma-1 chain C region, membrane-bound form (393 aa).

Residues Ala-1 to Ile-97 form a CH1 region. Cys-27 and Cys-82 form a disulfide bridge. The tract at residues Val-98–Thr-110 is hinge. Residues Val-111–Lys-217 are CH2. 2 cysteine pairs are disulfide-bonded: Cys-138-Cys-198 and Cys-244-Cys-302. N-linked (GlcNAc...) asparagine glycosylation is present at Asn-174. The interval Gly-218 to Leu-324 is CH3. A helical membrane pass occupies residues Gly-340–Cys-357. Topologically, residues Tyr-358–Pro-393 are cytoplasmic.

The protein resides in the cell membrane. In Mus musculus (Mouse), this protein is Ig gamma-1 chain C region, membrane-bound form (Ighg1).